A 341-amino-acid chain; its full sequence is tRNA N6-adenosine threonylcarbamoyltransferase (341 aa).

Residues histidine 111 and histidine 115 each coordinate Fe cation. Substrate contacts are provided by residues 134–138, aspartate 167, glycine 180, and asparagine 276; that span reads LVSGG. Aspartate 304 serves as a coordination point for Fe cation.

The protein belongs to the KAE1 / TsaD family. Requires Fe(2+) as cofactor.

The protein localises to the cytoplasm. The catalysed reaction is L-threonylcarbamoyladenylate + adenosine(37) in tRNA = N(6)-L-threonylcarbamoyladenosine(37) in tRNA + AMP + H(+). Its function is as follows. Required for the formation of a threonylcarbamoyl group on adenosine at position 37 (t(6)A37) in tRNAs that read codons beginning with adenine. Is involved in the transfer of the threonylcarbamoyl moiety of threonylcarbamoyl-AMP (TC-AMP) to the N6 group of A37, together with TsaE and TsaB. TsaD likely plays a direct catalytic role in this reaction. This Stutzerimonas stutzeri (strain A1501) (Pseudomonas stutzeri) protein is tRNA N6-adenosine threonylcarbamoyltransferase.